A 351-amino-acid polypeptide reads, in one-letter code: Thiamine-phosphate synthase (351 aa).

A unknown region spans residues 1–128 (MKNPNIIQPE…SKIASEIRYE (128 aa)). The segment at 129-351 (IYTLEIEILN…IIIKELSHEN (223 aa)) is thiamine-phosphate synthase. 4-amino-2-methyl-5-(diphosphooxymethyl)pyrimidine-binding positions include 180–184 (QHRFK) and asparagine 212. Positions 213 and 232 each coordinate Mg(2+). 4-amino-2-methyl-5-(diphosphooxymethyl)pyrimidine is bound at residue serine 251. A 2-[(2R,5Z)-2-carboxy-4-methylthiazol-5(2H)-ylidene]ethyl phosphate-binding site is contributed by 277–279 (TLT). Position 280 (lysine 280) interacts with 4-amino-2-methyl-5-(diphosphooxymethyl)pyrimidine. 2-[(2R,5Z)-2-carboxy-4-methylthiazol-5(2H)-ylidene]ethyl phosphate is bound by residues glycine 307 and 327-328 (VS).

This sequence belongs to the thiamine-phosphate synthase family.

It carries out the reaction 2-[(2R,5Z)-2-carboxy-4-methylthiazol-5(2H)-ylidene]ethyl phosphate + 4-amino-2-methyl-5-(diphosphooxymethyl)pyrimidine + 2 H(+) = thiamine phosphate + CO2 + diphosphate. The enzyme catalyses 2-(2-carboxy-4-methylthiazol-5-yl)ethyl phosphate + 4-amino-2-methyl-5-(diphosphooxymethyl)pyrimidine + 2 H(+) = thiamine phosphate + CO2 + diphosphate. The catalysed reaction is 4-methyl-5-(2-phosphooxyethyl)-thiazole + 4-amino-2-methyl-5-(diphosphooxymethyl)pyrimidine + H(+) = thiamine phosphate + diphosphate. The protein operates within cofactor biosynthesis; thiamine diphosphate biosynthesis; thiamine phosphate from 4-amino-2-methyl-5-diphosphomethylpyrimidine and 4-methyl-5-(2-phosphoethyl)-thiazole: step 1/1. Functionally, condenses 4-methyl-5-(beta-hydroxyethyl)thiazole monophosphate (THZ-P) and 2-methyl-4-amino-5-hydroxymethyl pyrimidine pyrophosphate (HMP-PP) to form thiamine monophosphate (TMP). In Prochlorococcus marinus subsp. pastoris (strain CCMP1986 / NIES-2087 / MED4), this protein is Thiamine-phosphate synthase.